Consider the following 431-residue polypeptide: Serine--tRNA ligase (431 aa).

238–240 serves as a coordination point for L-serine; that stretch reads TAE. 269–271 lines the ATP pocket; it reads RSE. Glu292 contacts L-serine. ATP is bound at residue 356-359; sequence EISS. Residue Ser392 coordinates L-serine.

It belongs to the class-II aminoacyl-tRNA synthetase family. Type-1 seryl-tRNA synthetase subfamily. As to quaternary structure, homodimer. The tRNA molecule binds across the dimer.

The protein localises to the cytoplasm. It carries out the reaction tRNA(Ser) + L-serine + ATP = L-seryl-tRNA(Ser) + AMP + diphosphate + H(+). The enzyme catalyses tRNA(Sec) + L-serine + ATP = L-seryl-tRNA(Sec) + AMP + diphosphate + H(+). It functions in the pathway aminoacyl-tRNA biosynthesis; selenocysteinyl-tRNA(Sec) biosynthesis; L-seryl-tRNA(Sec) from L-serine and tRNA(Sec): step 1/1. Functionally, catalyzes the attachment of serine to tRNA(Ser). Is also able to aminoacylate tRNA(Sec) with serine, to form the misacylated tRNA L-seryl-tRNA(Sec), which will be further converted into selenocysteinyl-tRNA(Sec). The polypeptide is Serine--tRNA ligase (Pectobacterium carotovorum subsp. carotovorum (strain PC1)).